The chain runs to 332 residues: 4-hydroxy-3-methylbut-2-enyl diphosphate reductase (332 aa).

Cys-34 contacts [4Fe-4S] cluster. Residues His-63 and His-96 each contribute to the (2E)-4-hydroxy-3-methylbut-2-enyl diphosphate site. Dimethylallyl diphosphate-binding residues include His-63 and His-96. Isopentenyl diphosphate-binding residues include His-63 and His-96. Cys-118 lines the [4Fe-4S] cluster pocket. Residue His-146 coordinates (2E)-4-hydroxy-3-methylbut-2-enyl diphosphate. His-146 serves as a coordination point for dimethylallyl diphosphate. Residue His-146 participates in isopentenyl diphosphate binding. Glu-148 (proton donor) is an active-site residue. Residue Thr-186 participates in (2E)-4-hydroxy-3-methylbut-2-enyl diphosphate binding. Cys-216 is a [4Fe-4S] cluster binding site. Residues Ser-244, Ser-245, Asn-246, and Ser-289 each contribute to the (2E)-4-hydroxy-3-methylbut-2-enyl diphosphate site. Ser-244, Ser-245, Asn-246, and Ser-289 together coordinate dimethylallyl diphosphate. Positions 244, 245, 246, and 289 each coordinate isopentenyl diphosphate.

The protein belongs to the IspH family. It depends on [4Fe-4S] cluster as a cofactor.

The catalysed reaction is isopentenyl diphosphate + 2 oxidized [2Fe-2S]-[ferredoxin] + H2O = (2E)-4-hydroxy-3-methylbut-2-enyl diphosphate + 2 reduced [2Fe-2S]-[ferredoxin] + 2 H(+). It catalyses the reaction dimethylallyl diphosphate + 2 oxidized [2Fe-2S]-[ferredoxin] + H2O = (2E)-4-hydroxy-3-methylbut-2-enyl diphosphate + 2 reduced [2Fe-2S]-[ferredoxin] + 2 H(+). It functions in the pathway isoprenoid biosynthesis; dimethylallyl diphosphate biosynthesis; dimethylallyl diphosphate from (2E)-4-hydroxy-3-methylbutenyl diphosphate: step 1/1. The protein operates within isoprenoid biosynthesis; isopentenyl diphosphate biosynthesis via DXP pathway; isopentenyl diphosphate from 1-deoxy-D-xylulose 5-phosphate: step 6/6. Functionally, catalyzes the conversion of 1-hydroxy-2-methyl-2-(E)-butenyl 4-diphosphate (HMBPP) into a mixture of isopentenyl diphosphate (IPP) and dimethylallyl diphosphate (DMAPP). Acts in the terminal step of the DOXP/MEP pathway for isoprenoid precursor biosynthesis. This is 4-hydroxy-3-methylbut-2-enyl diphosphate reductase from Mycolicibacterium paratuberculosis (strain ATCC BAA-968 / K-10) (Mycobacterium paratuberculosis).